The sequence spans 140 residues: Zinc finger SWIM domain-containing protein 7 (140 aa).

Residues 76–114 form an SWIM-type zinc finger; sequence YTCFTSCHYCPCPAFSFTVLRRNESLMCKHLLAVILSQA.

The protein belongs to the SWS1 family.

It localises to the nucleus. Involved in early stages of the homologous recombination repair (HRR) pathway of double-stranded DNA breaks arising during DNA replication or induced by DNA-damaging agents. This is Zinc finger SWIM domain-containing protein 7 (zswim7) from Danio rerio (Zebrafish).